Consider the following 189-residue polypeptide: dCTP deaminase (189 aa).

DCTP is bound by residues Lys-112–Arg-117, Thr-136–Glu-138, Gln-157, Tyr-171, and Gln-181. The Proton donor/acceptor role is filled by Glu-138.

It belongs to the dCTP deaminase family. As to quaternary structure, homotrimer.

It carries out the reaction dCTP + H2O + H(+) = dUTP + NH4(+). It participates in pyrimidine metabolism; dUMP biosynthesis; dUMP from dCTP (dUTP route): step 1/2. Functionally, catalyzes the deamination of dCTP to dUTP. The sequence is that of dCTP deaminase from Paraburkholderia xenovorans (strain LB400).